The chain runs to 267 residues: Methylglyoxal reductase DkgB (267 aa).

The active-site Proton donor is the Tyr-39. His-97 is a binding site for substrate. An NADP(+)-binding site is contributed by 179-231 (MTLAYGKALAEPVIKTIAEQHGATPAQVILSWAMQLGYGVIPSSTKAANLASN).

The protein belongs to the aldo/keto reductase family. In terms of assembly, monomer.

It localises to the cytoplasm. It carries out the reaction hydroxyacetone + NADP(+) = methylglyoxal + NADPH + H(+). Its function is as follows. Aldo-keto reductase that significantly contributes to cellular methylglyoxal detoxification by catalyzing the NADPH-dependent conversion of methylglyoxal to acetol. This Yersinia pestis protein is Methylglyoxal reductase DkgB.